The primary structure comprises 508 residues: Cobyric acid synthase (508 aa).

Residues 249–451 (EVDVAIINLP…IHGIFENSLF (203 aa)) form the GATase cobBQ-type domain. Residue cysteine 330 is the Nucleophile of the active site. Histidine 443 is an active-site residue.

It belongs to the CobB/CobQ family. CobQ subfamily.

The protein operates within cofactor biosynthesis; adenosylcobalamin biosynthesis. Functionally, catalyzes amidations at positions B, D, E, and G on adenosylcobyrinic A,C-diamide. NH(2) groups are provided by glutamine, and one molecule of ATP is hydrogenolyzed for each amidation. This chain is Cobyric acid synthase, found in Caldanaerobacter subterraneus subsp. tengcongensis (strain DSM 15242 / JCM 11007 / NBRC 100824 / MB4) (Thermoanaerobacter tengcongensis).